A 1174-amino-acid chain; its full sequence is Nucleolar complex protein 1 (1174 aa).

Disordered stretches follow at residues 1-20 (MPAAVATGVQFGGPPKNKKI), 29-237 (VVKQ…EESQ), 715-742 (YEDVKDEADDTKDSNPLEEKADNDVKSS), 893-922 (AQNKKQKEIKKDAAEEGDDGEAGEEYLKEG), 944-1085 (GVDE…GGRS), and 1116-1174 (VKGQ…KRKH). Positions 33-63 (NKKEHPQRPKFEGKEQVKKPQKIKFGEDGKA) are enriched in basic and acidic residues. Residues 95–104 (ASKSFNQNHK) are compositionally biased toward polar residues. Basic and acidic residues-rich tracts occupy residues 113-122 (KFGEDREAVH) and 176-200 (KFGDDGESKENFKKPQRIKFDEDGA). 2 stretches are compositionally biased toward acidic residues: residues 207–216 (SDGDSDEELG) and 715–724 (YEDVKDEADD). 2 stretches are compositionally biased toward basic and acidic residues: residues 725–739 (TKDSNPLEEKADNDV) and 897–906 (KQKEIKKDAA). 4 stretches are compositionally biased toward acidic residues: residues 907 to 916 (EEGDDGEAGE), 945 to 954 (VDEEQDEEEL), 981 to 1038 (AEDE…DEGS), and 1048 to 1065 (DSSDAPESPDEEDDDDED). Residues 1127 to 1143 (NKDKSSDKQLKWEENRR) show a composition bias toward basic and acidic residues. A compositionally biased stretch (low complexity) spans 1156-1166 (GKPAAKGGRPQ).

The protein belongs to the CBF/MAK21 family.

Its subcellular location is the nucleus. It localises to the nucleolus. Involved in rRNA processing and ribosome maturation. May also act as a transcription factor. The chain is Nucleolar complex protein 1 from Drosophila melanogaster (Fruit fly).